Consider the following 127-residue polypeptide: UPF0166 protein PH1503 (127 aa).

The protein belongs to the UPF0166 family.

This chain is UPF0166 protein PH1503, found in Pyrococcus horikoshii (strain ATCC 700860 / DSM 12428 / JCM 9974 / NBRC 100139 / OT-3).